A 203-amino-acid polypeptide reads, in one-letter code: Orotate phosphoribosyltransferase (203 aa).

5-phospho-alpha-D-ribose 1-diphosphate is bound by residues Arg-94, Lys-98, His-100, and 120–128 (EDLISTGGS). Ser-124 serves as a coordination point for orotate.

The protein belongs to the purine/pyrimidine phosphoribosyltransferase family. PyrE subfamily. In terms of assembly, homodimer. Requires Mg(2+) as cofactor.

The catalysed reaction is orotidine 5'-phosphate + diphosphate = orotate + 5-phospho-alpha-D-ribose 1-diphosphate. Its pathway is pyrimidine metabolism; UMP biosynthesis via de novo pathway; UMP from orotate: step 1/2. Functionally, catalyzes the transfer of a ribosyl phosphate group from 5-phosphoribose 1-diphosphate to orotate, leading to the formation of orotidine monophosphate (OMP). The sequence is that of Orotate phosphoribosyltransferase from Staphylococcus aureus (strain Mu50 / ATCC 700699).